The chain runs to 197 residues: Imidazoleglycerol-phosphate dehydratase (197 aa).

The protein belongs to the imidazoleglycerol-phosphate dehydratase family.

It is found in the cytoplasm. It carries out the reaction D-erythro-1-(imidazol-4-yl)glycerol 3-phosphate = 3-(imidazol-4-yl)-2-oxopropyl phosphate + H2O. Its pathway is amino-acid biosynthesis; L-histidine biosynthesis; L-histidine from 5-phospho-alpha-D-ribose 1-diphosphate: step 6/9. The chain is Imidazoleglycerol-phosphate dehydratase from Teredinibacter turnerae (strain ATCC 39867 / T7901).